The primary structure comprises 138 residues: Mini-ribonuclease 3 (138 aa).

Residue aspartate 33 is part of the active site.

This sequence belongs to the MrnC RNase family. As to quaternary structure, homodimer. It depends on Mg(2+) as a cofactor.

Its subcellular location is the cytoplasm. In terms of biological role, involved in correct processing of both the 5' and 3' ends of 23S rRNA precursor. Processes 30S rRNA precursor transcript even in absence of ribonuclease 3 (Rnc); Rnc processes 30S rRNA into smaller rRNA precursors. The protein is Mini-ribonuclease 3 of Synechococcus sp. (strain ATCC 27144 / PCC 6301 / SAUG 1402/1) (Anacystis nidulans).